The primary structure comprises 452 residues: Neuromedin-K receptor (452 aa).

The Extracellular segment spans residues 1–71 (MASVPRGENW…TNQFVQPSWR (71 aa)). N-linked (GlcNAc...) asparagine glycosylation is found at Asn9, Asn23, Asn40, and Asn60. The chain crosses the membrane as a helical span at residues 72-94 (IALWSLAYGLVVAVAVFGNLIVI). Residues 95–104 (WIILAHKRMR) are Cytoplasmic-facing. Residues 105–126 (TVTNYFLVNLAFSDASVAAFNT) traverse the membrane as a helical segment. The Extracellular segment spans residues 127–146 (LINFIYGLHSEWYFGANYCR). A disulfide bond links Cys145 and Cys220. The helical transmembrane segment at 147–168 (FQNFFPITAVFASIYSMTAIAV) threads the bilayer. The Cytoplasmic segment spans residues 169–188 (DRYMAIIDPLKPRLSATATK). The helical transmembrane segment at 189 to 209 (IVIGSIWILAFLLAFPQCLYS) threads the bilayer. The Extracellular segment spans residues 210 to 232 (KIKVMPGRTLCYVQWPEGPKQHF). A helical transmembrane segment spans residues 233–257 (TYHIIVIILVYCFPLLIMGVTYTIV). The Cytoplasmic portion of the chain corresponds to 258-286 (GITLWGGEIPGDTCDKYHEQLKAKRKVVK). The helical transmembrane segment at 287–308 (MMIIVVVTFAICWLPYHVYFIL) threads the bilayer. Topologically, residues 309 to 321 (TAIYQQLNRWKYI) are extracellular. A helical membrane pass occupies residues 322-346 (QQVYLASFWLAMSSTMYNPIIYCCL). At 347–452 (NKRFRAGFKR…SPYTSVDEYS (106 aa)) the chain is on the cytoplasmic side. Cys361 carries S-palmitoyl cysteine lipidation. Residues 400 to 452 (FDPNDGDPTKSSRKKRAVPRDPSANGCSHRGSKSASTTSSFISSPYTSVDEYS) are disordered. Residues 432 to 452 (KSASTTSSFISSPYTSVDEYS) show a composition bias toward low complexity.

Belongs to the G-protein coupled receptor 1 family. Post-translationally, the anchoring of this receptor to the plasma membrane is probably mediated by the palmitoylation of a cysteine residue.

The protein resides in the cell membrane. Its function is as follows. This is a receptor for the tachykinin neuropeptide neuromedin-K (neurokinin B). It is associated with G proteins that activate a phosphatidylinositol-calcium second messenger system. The rank order of affinity of this receptor to tachykinins is: neuromedin-K &gt; substance K &gt; substance P. In Rattus norvegicus (Rat), this protein is Neuromedin-K receptor (Tacr3).